A 75-amino-acid chain; its full sequence is uncharacterized protein (75 aa).

Residues 1–23 are disordered; sequence MADAMDLAQLREQEDRERHISNA. Over residues 9 to 20 the composition is skewed to basic and acidic residues; it reads QLREQEDRERHI. Residues 35 to 59 form a dksA C4-type zinc finger; it reads CEECDAPIPEARRRAIPGVQCCVTC.

This is an uncharacterized protein from Escherichia phage 186 (Bacteriophage 186).